A 240-amino-acid polypeptide reads, in one-letter code: Proteasome subunit alpha (240 aa).

The protein belongs to the peptidase T1A family. The 20S proteasome core is composed of 14 alpha and 14 beta subunits that assemble into four stacked heptameric rings, resulting in a barrel-shaped structure. The two inner rings, each composed of seven catalytic beta subunits, are sandwiched by two outer rings, each composed of seven alpha subunits. The catalytic chamber with the active sites is on the inside of the barrel. Has a gated structure, the ends of the cylinder being occluded by the N-termini of the alpha-subunits. Is capped at one or both ends by the proteasome regulatory ATPase, PAN.

It is found in the cytoplasm. Its activity is regulated as follows. The formation of the proteasomal ATPase PAN-20S proteasome complex, via the docking of the C-termini of PAN into the intersubunit pockets in the alpha-rings, triggers opening of the gate for substrate entry. Interconversion between the open-gate and close-gate conformations leads to a dynamic regulation of the 20S proteasome proteolysis activity. Its function is as follows. Component of the proteasome core, a large protease complex with broad specificity involved in protein degradation. The chain is Proteasome subunit alpha from Methanoculleus marisnigri (strain ATCC 35101 / DSM 1498 / JR1).